The primary structure comprises 453 residues: UDP-N-acetylmuramoylalanine--D-glutamate ligase (453 aa).

120–126 lines the ATP pocket; sequence GSNGKST.

It belongs to the MurCDEF family.

Its subcellular location is the cytoplasm. It carries out the reaction UDP-N-acetyl-alpha-D-muramoyl-L-alanine + D-glutamate + ATP = UDP-N-acetyl-alpha-D-muramoyl-L-alanyl-D-glutamate + ADP + phosphate + H(+). It participates in cell wall biogenesis; peptidoglycan biosynthesis. Its function is as follows. Cell wall formation. Catalyzes the addition of glutamate to the nucleotide precursor UDP-N-acetylmuramoyl-L-alanine (UMA). The protein is UDP-N-acetylmuramoylalanine--D-glutamate ligase of Teredinibacter turnerae (strain ATCC 39867 / T7901).